We begin with the raw amino-acid sequence, 153 residues long: 3-hydroxyacyl-[acyl-carrier-protein] dehydratase FabZ (153 aa).

The active site involves His54.

This sequence belongs to the thioester dehydratase family. FabZ subfamily.

The protein resides in the cytoplasm. It carries out the reaction a (3R)-hydroxyacyl-[ACP] = a (2E)-enoyl-[ACP] + H2O. Functionally, involved in unsaturated fatty acids biosynthesis. Catalyzes the dehydration of short chain beta-hydroxyacyl-ACPs and long chain saturated and unsaturated beta-hydroxyacyl-ACPs. This chain is 3-hydroxyacyl-[acyl-carrier-protein] dehydratase FabZ, found in Chlamydia muridarum (strain MoPn / Nigg).